The chain runs to 398 residues: 4-hydroxy-3-methylbut-2-enyl diphosphate reductase (398 aa).

A [4Fe-4S] cluster-binding site is contributed by cysteine 66. Residue histidine 96 participates in (2E)-4-hydroxy-3-methylbut-2-enyl diphosphate binding. Histidine 96 serves as a coordination point for dimethylallyl diphosphate. Histidine 96 contributes to the isopentenyl diphosphate binding site. Cysteine 157 lines the [4Fe-4S] cluster pocket. Histidine 185 contacts (2E)-4-hydroxy-3-methylbut-2-enyl diphosphate. Histidine 185 is a dimethylallyl diphosphate binding site. Residue histidine 185 participates in isopentenyl diphosphate binding. Glutamate 187 acts as the Proton donor in catalysis. A (2E)-4-hydroxy-3-methylbut-2-enyl diphosphate-binding site is contributed by threonine 250. Cysteine 288 is a [4Fe-4S] cluster binding site. 4 residues coordinate (2E)-4-hydroxy-3-methylbut-2-enyl diphosphate: serine 317, serine 318, asparagine 319, and serine 380. Residues serine 317, serine 318, asparagine 319, and serine 380 each contribute to the dimethylallyl diphosphate site. Isopentenyl diphosphate contacts are provided by serine 317, serine 318, asparagine 319, and serine 380.

This sequence belongs to the IspH family. [4Fe-4S] cluster serves as cofactor.

It carries out the reaction isopentenyl diphosphate + 2 oxidized [2Fe-2S]-[ferredoxin] + H2O = (2E)-4-hydroxy-3-methylbut-2-enyl diphosphate + 2 reduced [2Fe-2S]-[ferredoxin] + 2 H(+). It catalyses the reaction dimethylallyl diphosphate + 2 oxidized [2Fe-2S]-[ferredoxin] + H2O = (2E)-4-hydroxy-3-methylbut-2-enyl diphosphate + 2 reduced [2Fe-2S]-[ferredoxin] + 2 H(+). Its pathway is isoprenoid biosynthesis; dimethylallyl diphosphate biosynthesis; dimethylallyl diphosphate from (2E)-4-hydroxy-3-methylbutenyl diphosphate: step 1/1. The protein operates within isoprenoid biosynthesis; isopentenyl diphosphate biosynthesis via DXP pathway; isopentenyl diphosphate from 1-deoxy-D-xylulose 5-phosphate: step 6/6. Its function is as follows. Catalyzes the conversion of 1-hydroxy-2-methyl-2-(E)-butenyl 4-diphosphate (HMBPP) into a mixture of isopentenyl diphosphate (IPP) and dimethylallyl diphosphate (DMAPP). Acts in the terminal step of the DOXP/MEP pathway for isoprenoid precursor biosynthesis. The sequence is that of 4-hydroxy-3-methylbut-2-enyl diphosphate reductase from Prochlorococcus marinus (strain MIT 9301).